Consider the following 67-residue polypeptide: Neurotoxin Os3 (67 aa).

Positions 3-67 (RDGYIAQPHN…GVIVDGEKCH (65 aa)) constitute an LCN-type CS-alpha/beta domain. 4 cysteine pairs are disulfide-bonded: C13–C66, C17–C39, C24–C48, and C28–C50.

The protein belongs to the long (4 C-C) scorpion toxin superfamily. Sodium channel inhibitor family. Alpha subfamily. Expressed by the venom gland.

It localises to the secreted. In terms of biological role, binds to sodium channels (Nav) and inhibits the inactivation of the activated channels, thereby blocking neuronal transmission. This Orthochirus scrobiculosus (Central Asian scorpion) protein is Neurotoxin Os3.